Here is a 500-residue protein sequence, read N- to C-terminus: 4-alpha-glucanotransferase (500 aa).

The protein belongs to the disproportionating enzyme family.

It localises to the cytoplasm. The catalysed reaction is Transfers a segment of a (1-&gt;4)-alpha-D-glucan to a new position in an acceptor, which may be glucose or a (1-&gt;4)-alpha-D-glucan.. In Thermus thermophilus, this protein is 4-alpha-glucanotransferase (malQ).